Reading from the N-terminus, the 268-residue chain is MKLKLFPFQAAGHGQVLVSEDDKILIKPCIKSEVDFYKTCNDNITLYNWIPKNFGEWMPSSRDIEGINPIAESVAFSLTGKAIILENILYQMETPCVMDIKLGKQLWADDAPLEKRKRLDAVSRSTTSGSLGFRITGILSWDRTNNTYIKRSTAWGKTLTDSDVVEGLNDFFVSCSLSQKARLVESFLNLLKLFEVDLSESYIELKSSSILFVYDYSSLNPTYHCESNVVLKLIDLAHSRWTKNTIDHNTLIGVKNLIHCFAMLLKNE.

Residues Lys27, 86 to 88 (ENI), and Asp99 each bind ATP. A substrate-binding site is contributed by 127–135 (TSGSLGFRI). Position 235 (Asp235) interacts with ATP.

It belongs to the inositol phosphokinase (IPK) family.

The protein resides in the cytoplasm. Its subcellular location is the nucleus. The catalysed reaction is 1D-myo-inositol 1,4,5-trisphosphate + 2 ATP = 1D-myo-inositol 1,3,4,5,6-pentakisphosphate + 2 ADP + 2 H(+). It catalyses the reaction 1D-myo-inositol 1,4,5-trisphosphate + ATP = 1D-myo-inositol 1,4,5,6-tetrakisphosphate + ADP + H(+). It carries out the reaction 1D-myo-inositol 1,4,5-trisphosphate + ATP = 1D-myo-inositol 1,3,4,5-tetrakisphosphate + ADP + H(+). The enzyme catalyses 1D-myo-inositol 1,4,5,6-tetrakisphosphate + ATP = 1D-myo-inositol 1,3,4,5,6-pentakisphosphate + ADP + H(+). Its function is as follows. Inositol phosphate kinase with both monophosphoinositol and diphosphoinositol polyphosphate synthase activities. Able to phosphorylate inositol 1,4,5-trisphosphate (Ins(1,4,5)P3) on both the carbon-3 and carbon-6 positions to synthesize inositol 1,3,4,5-tetrakisphosphate (Ins(1,3,4,5)P4) and inositol 1,4,5,6-tetrakisphosphate (Ins(1,4,5,6)P4), and then to subsequently phosphorylate and convert either isomer of InsP4 to inositol 1,3,4,5,6-pentakisphosphate (Ins(1,3,4,5,6)P5). Also converts (Ins(1,3,4,5,6)P5) to InsP6. Also has a role in transcription regulation. The catalytic activity is required for PHO gene repression by phosphate and for NCR gene activation in response to nitrogen availability, indicating a role for inositol pyrophosphates in these controls. Inositol polyphosphates may be involved in the regulation of chromatin remodeling of transcription. The polypeptide is Inositol polyphosphate multikinase (arg82) (Schizosaccharomyces pombe (strain 972 / ATCC 24843) (Fission yeast)).